Reading from the N-terminus, the 361-residue chain is Phospho-N-acetylmuramoyl-pentapeptide-transferase (361 aa).

Helical transmembrane passes span 27 to 47 (GALFTAGLFVFWFGPWIISLL), 72 to 92 (TPTMGGLMILAGLLVAVFLWA), 99 to 119 (VWITVVVTLGFGAIGFYDDYL), 139 to 159 (ALIAVAACVAVAEYSAPGLAY), 169 to 189 (AIVNLGLFWIFFASFVIVGAG), 200 to 220 (GLAIVPVMIAAATFGIIAYLV), 240 to 260 (LAVVCGALIGAGLGFLWFNAP), 264 to 284 (IFMGDTGSLALGGLLGTVAVA), 289 to 309 (IVLAVVGGLFVLEIASVIIQV), and 338 to 358 (QVVIRFWIIAVVLALLGLATL).

It belongs to the glycosyltransferase 4 family. MraY subfamily. It depends on Mg(2+) as a cofactor.

The protein resides in the cell inner membrane. The catalysed reaction is UDP-N-acetyl-alpha-D-muramoyl-L-alanyl-gamma-D-glutamyl-meso-2,6-diaminopimeloyl-D-alanyl-D-alanine + di-trans,octa-cis-undecaprenyl phosphate = di-trans,octa-cis-undecaprenyl diphospho-N-acetyl-alpha-D-muramoyl-L-alanyl-D-glutamyl-meso-2,6-diaminopimeloyl-D-alanyl-D-alanine + UMP. It functions in the pathway cell wall biogenesis; peptidoglycan biosynthesis. In terms of biological role, catalyzes the initial step of the lipid cycle reactions in the biosynthesis of the cell wall peptidoglycan: transfers peptidoglycan precursor phospho-MurNAc-pentapeptide from UDP-MurNAc-pentapeptide onto the lipid carrier undecaprenyl phosphate, yielding undecaprenyl-pyrophosphoryl-MurNAc-pentapeptide, known as lipid I. In Methylobacterium sp. (strain 4-46), this protein is Phospho-N-acetylmuramoyl-pentapeptide-transferase.